Here is a 350-residue protein sequence, read N- to C-terminus: (S)-tetrahydroprotoberberine N-methyltransferase (350 aa).

The S-adenosyl-L-methionine site is built by serine 91, glycine 129, asparagine 153, glutamine 157, aspartate 179, valine 180, and valine 195. Cysteine 325 is an active-site residue.

The protein belongs to the CFA/CMAS family. In terms of assembly, homodimer.

The protein resides in the cytoplasm. It catalyses the reaction (S)-stylopine + S-adenosyl-L-methionine = (S)-cis-N-methylstylopine + S-adenosyl-L-homocysteine. The enzyme catalyses (S)-tetrahydropalmatine + S-adenosyl-L-methionine = (S)-cis-N-methyltetrahydropalmatine + S-adenosyl-L-homocysteine. The catalysed reaction is (S)-canadine + S-adenosyl-L-methionine = (S)-cis-N-methylcanadine + S-adenosyl-L-homocysteine. It carries out the reaction (S)-scoulerine + S-adenosyl-L-methionine = (S)-cis-N-methylscoulerine + S-adenosyl-L-homocysteine. Its pathway is alkaloid biosynthesis. N-methyltransferase with a broad substrate range, accepting protoberberine alkaloids (R,S)-stylopine, (R,S)-nandinine and (R,S)-tetrahydropalmatine, and to a lesser extent (R,S)-canadine, (R,S)-tetrahydrogroenlandicine (cheilanthifoline) and (S)-scoulerine. The polypeptide is (S)-tetrahydroprotoberberine N-methyltransferase (Eschscholzia californica (California poppy)).